A 480-amino-acid polypeptide reads, in one-letter code: UDP-N-acetylmuramate--L-alanine ligase (480 aa).

129 to 135 (GSHGKTT) is an ATP binding site.

This sequence belongs to the MurCDEF family.

It localises to the cytoplasm. It carries out the reaction UDP-N-acetyl-alpha-D-muramate + L-alanine + ATP = UDP-N-acetyl-alpha-D-muramoyl-L-alanine + ADP + phosphate + H(+). It functions in the pathway cell wall biogenesis; peptidoglycan biosynthesis. In terms of biological role, cell wall formation. This is UDP-N-acetylmuramate--L-alanine ligase from Syntrophus aciditrophicus (strain SB).